The primary structure comprises 187 residues: Urease accessory protein UreE (187 aa).

The disordered stretch occupies residues 154–187 (RANSAQGHGHSHGHSHSHDHHGYHHHGDGNWHKH). Positions 162-177 (GHSHGHSHSHDHHGYH) are enriched in basic residues. Residues 178 to 187 (HHGDGNWHKH) show a composition bias toward basic and acidic residues.

Belongs to the UreE family.

The protein resides in the cytoplasm. Functionally, involved in urease metallocenter assembly. Binds nickel. Probably functions as a nickel donor during metallocenter assembly. The protein is Urease accessory protein UreE of Actinobacillus pleuropneumoniae (Haemophilus pleuropneumoniae).